Here is a 503-residue protein sequence, read N- to C-terminus: Probable cytosol aminopeptidase (503 aa).

Residues lysine 274 and aspartate 279 each coordinate Mn(2+). The active site involves lysine 286. Mn(2+) is bound by residues aspartate 297, aspartate 356, and glutamate 358. Residue arginine 360 is part of the active site.

The protein belongs to the peptidase M17 family. Mn(2+) serves as cofactor.

It localises to the cytoplasm. It catalyses the reaction Release of an N-terminal amino acid, Xaa-|-Yaa-, in which Xaa is preferably Leu, but may be other amino acids including Pro although not Arg or Lys, and Yaa may be Pro. Amino acid amides and methyl esters are also readily hydrolyzed, but rates on arylamides are exceedingly low.. The catalysed reaction is Release of an N-terminal amino acid, preferentially leucine, but not glutamic or aspartic acids.. In terms of biological role, presumably involved in the processing and regular turnover of intracellular proteins. Catalyzes the removal of unsubstituted N-terminal amino acids from various peptides. This chain is Probable cytosol aminopeptidase, found in Burkholderia thailandensis (strain ATCC 700388 / DSM 13276 / CCUG 48851 / CIP 106301 / E264).